The following is a 255-amino-acid chain: NAD(P)H-quinone oxidoreductase subunit K, chloroplastic (255 aa).

Cys47, Cys48, Cys112, and Cys143 together coordinate [4Fe-4S] cluster.

Belongs to the complex I 20 kDa subunit family. In terms of assembly, NDH is composed of at least 16 different subunits, 5 of which are encoded in the nucleus. It depends on [4Fe-4S] cluster as a cofactor.

It localises to the plastid. The protein localises to the chloroplast thylakoid membrane. The enzyme catalyses a plastoquinone + NADH + (n+1) H(+)(in) = a plastoquinol + NAD(+) + n H(+)(out). It carries out the reaction a plastoquinone + NADPH + (n+1) H(+)(in) = a plastoquinol + NADP(+) + n H(+)(out). Its function is as follows. NDH shuttles electrons from NAD(P)H:plastoquinone, via FMN and iron-sulfur (Fe-S) centers, to quinones in the photosynthetic chain and possibly in a chloroplast respiratory chain. The immediate electron acceptor for the enzyme in this species is believed to be plastoquinone. Couples the redox reaction to proton translocation, and thus conserves the redox energy in a proton gradient. The chain is NAD(P)H-quinone oxidoreductase subunit K, chloroplastic from Zygnema circumcarinatum (Green alga).